The chain runs to 335 residues: Ubiquinone biosynthesis protein COQ4, mitochondrial (335 aa).

A mitochondrion-targeting transit peptide spans 1–10; that stretch reads MLRLSLLRST. His210, Asp211, His214, and Glu226 together coordinate Zn(2+).

It belongs to the COQ4 family. Component of a multi-subunit COQ enzyme complex, composed of at least COQ3, COQ4, COQ5, COQ6, COQ7 and COQ9. Interacts with COQ3. Zn(2+) serves as cofactor.

It is found in the mitochondrion inner membrane. It catalyses the reaction 4-hydroxy-3-methoxy-5-(all-trans-hexaprenyl)benzoate + H(+) = 2-methoxy-6-(all-trans-hexaprenyl)phenol + CO2. The protein operates within cofactor biosynthesis; ubiquinone biosynthesis. Its function is as follows. Lyase that catalyzes the C1-decarboxylation of 4-hydroxy-3-methoxy-5-(all-trans-hexaprenyl)benzoic acid into 2-methoxy-6-(all-trans-hexaprenyl)phenol during ubiquinone biosynthesis. This chain is Ubiquinone biosynthesis protein COQ4, mitochondrial, found in Saccharomyces cerevisiae (strain RM11-1a) (Baker's yeast).